Here is a 233-residue protein sequence, read N- to C-terminus: Ribose-5-phosphate isomerase A (233 aa).

Residues 28–31, 83–86, and 96–99 contribute to the substrate site; these read SGST, DGAD, and KGGG. The active-site Proton acceptor is Glu105. Lys123 provides a ligand contact to substrate.

This sequence belongs to the ribose 5-phosphate isomerase family. As to quaternary structure, homodimer.

The catalysed reaction is aldehydo-D-ribose 5-phosphate = D-ribulose 5-phosphate. Its pathway is carbohydrate degradation; pentose phosphate pathway; D-ribose 5-phosphate from D-ribulose 5-phosphate (non-oxidative stage): step 1/1. Its function is as follows. Catalyzes the reversible conversion of ribose-5-phosphate to ribulose 5-phosphate. The protein is Ribose-5-phosphate isomerase A of Maricaulis maris (strain MCS10) (Caulobacter maris).